Here is a 421-residue protein sequence, read N- to C-terminus: 4-hydroxy-3-methylbut-2-en-1-yl diphosphate synthase (flavodoxin) (421 aa).

[4Fe-4S] cluster is bound by residues cysteine 298, cysteine 301, cysteine 344, and glutamate 351.

This sequence belongs to the IspG family. The cofactor is [4Fe-4S] cluster.

The enzyme catalyses (2E)-4-hydroxy-3-methylbut-2-enyl diphosphate + oxidized [flavodoxin] + H2O + 2 H(+) = 2-C-methyl-D-erythritol 2,4-cyclic diphosphate + reduced [flavodoxin]. It participates in isoprenoid biosynthesis; isopentenyl diphosphate biosynthesis via DXP pathway; isopentenyl diphosphate from 1-deoxy-D-xylulose 5-phosphate: step 5/6. In terms of biological role, converts 2C-methyl-D-erythritol 2,4-cyclodiphosphate (ME-2,4cPP) into 1-hydroxy-2-methyl-2-(E)-butenyl 4-diphosphate. The polypeptide is 4-hydroxy-3-methylbut-2-en-1-yl diphosphate synthase (flavodoxin) (Neisseria gonorrhoeae (strain ATCC 700825 / FA 1090)).